A 136-amino-acid chain; its full sequence is Large ribosomal subunit protein uL16 (136 aa).

It belongs to the universal ribosomal protein uL16 family. In terms of assembly, part of the 50S ribosomal subunit.

Binds 23S rRNA and is also seen to make contacts with the A and possibly P site tRNAs. This is Large ribosomal subunit protein uL16 from Shewanella woodyi (strain ATCC 51908 / MS32).